Here is a 229-residue protein sequence, read N- to C-terminus: Peptidase E (229 aa).

Residues Ser120, Asp135, and His157 each act as charge relay system in the active site.

It belongs to the peptidase S51 family.

The protein resides in the cytoplasm. It carries out the reaction Dipeptidase E catalyzes the hydrolysis of dipeptides Asp-|-Xaa. It does not act on peptides with N-terminal Glu, Asn or Gln, nor does it cleave isoaspartyl peptides.. Its function is as follows. Hydrolyzes dipeptides containing N-terminal aspartate residues. May play a role in allowing the cell to use peptide aspartate to spare carbon otherwise required for the synthesis of the aspartate family of amino acids. This is Peptidase E from Salmonella paratyphi C (strain RKS4594).